A 249-amino-acid polypeptide reads, in one-letter code: tRNA (guanine-N(1)-)-methyltransferase (249 aa).

S-adenosyl-L-methionine contacts are provided by residues G113 and 133 to 138 (IGDFVV).

The protein belongs to the RNA methyltransferase TrmD family. In terms of assembly, homodimer.

The protein resides in the cytoplasm. The catalysed reaction is guanosine(37) in tRNA + S-adenosyl-L-methionine = N(1)-methylguanosine(37) in tRNA + S-adenosyl-L-homocysteine + H(+). Functionally, specifically methylates guanosine-37 in various tRNAs. This is tRNA (guanine-N(1)-)-methyltransferase from Neisseria gonorrhoeae (strain ATCC 700825 / FA 1090).